Reading from the N-terminus, the 908-residue chain is Protein translocase subunit SecA (908 aa).

Residues glutamine 87, 105 to 109, and aspartate 512 each bind ATP; that span reads GEGKT. A disordered region spans residues 865–908; sequence GGDDGSDEMMAHTPMIRDGDKVGRNDPCPCGSGRKYKQCHGKLS. The segment covering 879-888 has biased composition (basic and acidic residues); sequence MIRDGDKVGR. Zn(2+) contacts are provided by cysteine 892, cysteine 894, cysteine 903, and histidine 904. Residues 898 to 908 show a composition bias toward basic residues; sequence RKYKQCHGKLS.

This sequence belongs to the SecA family. In terms of assembly, monomer and homodimer. Part of the essential Sec protein translocation apparatus which comprises SecA, SecYEG and auxiliary proteins SecDF-YajC and YidC. Requires Zn(2+) as cofactor.

Its subcellular location is the cell inner membrane. The protein localises to the cytoplasm. It carries out the reaction ATP + H2O + cellular proteinSide 1 = ADP + phosphate + cellular proteinSide 2.. Functionally, part of the Sec protein translocase complex. Interacts with the SecYEG preprotein conducting channel. Has a central role in coupling the hydrolysis of ATP to the transfer of proteins into and across the cell membrane, serving both as a receptor for the preprotein-SecB complex and as an ATP-driven molecular motor driving the stepwise translocation of polypeptide chains across the membrane. This Shewanella sp. (strain MR-4) protein is Protein translocase subunit SecA.